Reading from the N-terminus, the 356-residue chain is Heparan sulfate 2-O-sulfotransferase 1 (356 aa).

Over 1 to 11 (MGLLRIMMPPK) the chain is Cytoplasmic. The chain crosses the membrane as a helical; Signal-anchor for type II membrane protein span at residues 12-28 (LQLLAVVAFAVAMLFLE). Positions 24–51 (MLFLENQIQKLEESRSKLERAIARHEVR) form a coiled coil. Over 29–356 (NQIQKLEESR…FYEKIYPKSN (328 aa)) the chain is Lumenal. Positions 83, 84, 85, 86, 87, and 88 each coordinate adenosine 3',5'-bisphosphate. N-linked (GlcNAc...) asparagine glycosylation is found at Asn-108 and Asn-127. Residues His-140 and His-142 contribute to the active site. 2 residues coordinate adenosine 3',5'-bisphosphate: Arg-164 and Ser-172. 2 disulfide bridges follow: Cys-201–Cys-209 and Cys-222–Cys-228. Adenosine 3',5'-bisphosphate-binding residues include Tyr-279, Ser-285, Thr-290, and Lys-293.

Belongs to the sulfotransferase 3 family. In terms of assembly, homotrimer. Interacts with the C5-epimerase GLCE. N-glycosylated.

The protein localises to the golgi apparatus membrane. Functionally, catalyzes the transfer of a sulfo group from 3'-phospho-5'-adenylyl sulfate (PAPS) to the 2-OH position of iduronic acid (IdoA) or glucuronic acid (GlcA) within the heparan sulfate (HS) chain and participates in HS biosynthesis. Required for metanephric development of kidney formation, suggesting that 2-O-sulfation within HS is essential for signaling between ureteric bud and metanephric mesenchyme. The sequence is that of Heparan sulfate 2-O-sulfotransferase 1 from Pongo abelii (Sumatran orangutan).